The sequence spans 667 residues: UvrABC system protein B (667 aa).

Positions 31–414 (AGIESGEKEQ…EMDRTKHVVQ (384 aa)) constitute a Helicase ATP-binding domain. 44 to 51 (GATGTGKT) lines the ATP pocket. The Beta-hairpin motif lies at 97 to 120 (YYDYYQPEAYVPSSDTYIEKDSAI). The region spanning 435-597 (QIDDLVGEIN…ITPHTIKKAI (163 aa)) is the Helicase C-terminal domain. Positions 630–665 (LDMISKLEEQMKTAAKKLDFEQAATLRDTVMELKAQ) constitute a UVR domain.

Belongs to the UvrB family. In terms of assembly, forms a heterotetramer with UvrA during the search for lesions. Interacts with UvrC in an incision complex.

It localises to the cytoplasm. Its function is as follows. The UvrABC repair system catalyzes the recognition and processing of DNA lesions. A damage recognition complex composed of 2 UvrA and 2 UvrB subunits scans DNA for abnormalities. Upon binding of the UvrA(2)B(2) complex to a putative damaged site, the DNA wraps around one UvrB monomer. DNA wrap is dependent on ATP binding by UvrB and probably causes local melting of the DNA helix, facilitating insertion of UvrB beta-hairpin between the DNA strands. Then UvrB probes one DNA strand for the presence of a lesion. If a lesion is found the UvrA subunits dissociate and the UvrB-DNA preincision complex is formed. This complex is subsequently bound by UvrC and the second UvrB is released. If no lesion is found, the DNA wraps around the other UvrB subunit that will check the other stand for damage. This Lactiplantibacillus plantarum (strain ATCC BAA-793 / NCIMB 8826 / WCFS1) (Lactobacillus plantarum) protein is UvrABC system protein B.